The sequence spans 312 residues: MAWENQTFNSDFILLGIFNHSPTHTFLFFLVLAIFSVAFMGNSVMVLLIYLDTQLHTPMYFLLSQLFLMDLMLICSTVPKMAFNYLSGSKSISMAGCATQIFFYVSLLGSECFLLAVMSYDRYIAICHPLRYTNLMRPKICGLMTAFSWILGSMDAIIDAVATFSFSYCGSREIAHFFCDFPSLLILSCNDTSIFEKVLFICCIVMIVFPVAIIIASYARVILAVIHMGSGEGRRKAFTTCSSHLMVVGMYYGAGLFMYIRPTSDRSPMQDKLVSVFYTILTPMLNPLIYSLRNKEVTRALRKVLGKGKCGE.

At 1 to 25 the chain is on the extracellular side; sequence MAWENQTFNSDFILLGIFNHSPTHT. An N-linked (GlcNAc...) asparagine glycan is attached at asparagine 5. Residues 26-49 traverse the membrane as a helical segment; that stretch reads FLFFLVLAIFSVAFMGNSVMVLLI. Over 50–57 the chain is Cytoplasmic; it reads YLDTQLHT. A helical membrane pass occupies residues 58–79; the sequence is PMYFLLSQLFLMDLMLICSTVP. Residues 80-100 lie on the Extracellular side of the membrane; the sequence is KMAFNYLSGSKSISMAGCATQ. A disulfide bridge links cysteine 97 with cysteine 189. A helical membrane pass occupies residues 101–120; the sequence is IFFYVSLLGSECFLLAVMSY. The Cytoplasmic portion of the chain corresponds to 121 to 139; the sequence is DRYIAICHPLRYTNLMRPK. Residues 140 to 158 form a helical membrane-spanning segment; the sequence is ICGLMTAFSWILGSMDAII. Topologically, residues 159 to 195 are extracellular; it reads DAVATFSFSYCGSREIAHFFCDFPSLLILSCNDTSIF. The helical transmembrane segment at 196-219 threads the bilayer; that stretch reads EKVLFICCIVMIVFPVAIIIASYA. The Cytoplasmic portion of the chain corresponds to 220–236; it reads RVILAVIHMGSGEGRRK. Residues 237–259 form a helical membrane-spanning segment; that stretch reads AFTTCSSHLMVVGMYYGAGLFMY. Topologically, residues 260 to 272 are extracellular; sequence IRPTSDRSPMQDK. Residues 273-292 form a helical membrane-spanning segment; it reads LVSVFYTILTPMLNPLIYSL. Topologically, residues 293-311 are cytoplasmic; the sequence is RNKEVTRALRKVLGKGKCG.

This sequence belongs to the G-protein coupled receptor 1 family.

The protein localises to the cell membrane. Its function is as follows. Odorant receptor. The protein is Olfactory receptor 2M5 (OR2M5) of Homo sapiens (Human).